Here is a 688-residue protein sequence, read N- to C-terminus: Lipase (688 aa).

The signal sequence occupies residues 1–35 (MKTRQNKYSIRKFSVGASSILIAALLFMGGGSAQA). Residues 31-309 (GSAQAAEQQQ…KSAKQKQYKN (279 aa)) form a disordered region. Residues 36–302 (AEQQQDKGTV…KNEDQTNKSA (267 aa)) constitute a propeptide, removed in mature form. Over residues 45–54 (VENSTTQSIG) the composition is skewed to polar residues. 2 stretches are compositionally biased toward basic and acidic residues: residues 84 to 95 (ESLHNETPKNED) and 103 to 143 (SQND…KHAS). Composition is skewed to polar residues over residues 144-175 (ENNQTLHSKAAQSNEDVKTKPSQLDNTTAQQE) and 184-211 (KQDTQSSKTTDLLRATGQNQSKDSQSTE). The segment covering 227–268 (KNDDDKVETFNLNSKEEPLKVDKQANPTTDKDKSSKNDKGSH) has biased composition (basic and acidic residues). The segment covering 274–289 (LESNAVATTNKQSKQQ) has biased composition (polar residues). Serine 418 functions as the Nucleophile in the catalytic mechanism. Aspartate 609 (charge relay system) is an active-site residue. Aspartate 647 is a Ca(2+) binding site. The Charge relay system role is filled by histidine 648. Residues aspartate 650, aspartate 655, and aspartate 658 each coordinate Ca(2+).

This sequence belongs to the AB hydrolase superfamily. Lipase family.

The protein localises to the secreted. It catalyses the reaction a triacylglycerol + H2O = a diacylglycerol + a fatty acid + H(+). The chain is Lipase (lip) from Staphylococcus epidermidis (strain ATCC 35984 / DSM 28319 / BCRC 17069 / CCUG 31568 / BM 3577 / RP62A).